A 1058-amino-acid polypeptide reads, in one-letter code: MPKRTDIQKIMVIGSGPIIIGQAAEFDYAGTQACLSLKEEGYEVVLVNSNPATIMTDKEIADKVYIEPITLEFVTRILRKEGPDALLPTLGGQTGLNMAMELSKNGILDELGVELLGTKLSAIDQAEDRDLFKQLMEELEQPIPESEIVNTVEEAVAFAATIGYPVIVRPAFTLGGTGGGMCANEKELREITENGLKLSPVTQCLIERSIAGFKEIEYEVMRDSADNALVVCNMENFDPVGIHTGDSIVFAPAQTMSDYENQMLRDASLSIIRALKIEGGCNVQLALDPNSFKYYVIEVNPRVSRSSALASKATGYPIAKLAAKIAVGLTLDEVINPVTGSTYAMFEPALDYVVAKIPRFPFDKFEKGERRLGTQMKATGEVMAIGRNIEESLLKACRSLEIGVHHNEIPELAAVSDDALIEKVVKAQDDRLFYVSEAIRRGYTPEEIAELTKIDIFYLDKLLHIFEIEQELGAHPQDLEVLKTAKLNGFSDRKIAELWGTTDDQVRQLRLENKIVPVYKMVDTCAAEFDSETPYFYSTYGWENESIRSDKESVLVLGSGPIRIGQGVEFDYATVHSVKAIQAAGYEAIIMNSNPETVSTDFSVSDKLYFEPLTFEDVMNVIDLEQPKGVIVQFGGQTAINLAEPLAKAGVTILGTQVADLDRAEDRDLFEQALKELDIPQPPGQTATNEEEAALAARKIGFPVLVRPSYVLGGRAMEIVENEEDLRSYMRTAVKASPDHPVLVDSYIVGQECEVDAISDGKDVLIPGIMEHIERAGVHSGDSMAVYPPQTLSQKVQETIADYTKRLAIGLHCLGMMNIQFVIKDEKVYVIEVNPRASRTVPFLSKVTNIPMAQVATKLILGQSLSELGYQNGLYPESTRVHIKAPVFSFTKLAKVDSLLGPEMKSTGEVMGSDATLEKALYKAFEASYLHLPTFGNVVFTIADDAKEEALNLARRFQNIGYGILATEGTAAFFASHGLQAQPVGKIGDDDKDIPSFVRKGRIQAIINTVGTKRTADEDGEQIRRSAIEHGVPLFTALDTANAMLKVLESRSFVTEAI.

Residues 1–401 are carboxyphosphate synthetic domain; it reads MPKRTDIQKI…SLLKACRSLE (401 aa). Arg129, Arg169, Gly175, Gly176, Arg208, Ile210, Glu215, Gly241, Ile242, His243, Gln284, and Glu298 together coordinate ATP. Residues 133 to 327 enclose the ATP-grasp 1 domain; sequence KQLMEELEQP…IAKLAAKIAV (195 aa). Mg(2+)-binding residues include Gln284, Glu298, and Asn300. Residues Gln284, Glu298, and Asn300 each contribute to the Mn(2+) site. The interval 402–546 is oligomerization domain; sequence IGVHHNEIPE…YSTYGWENES (145 aa). The carbamoyl phosphate synthetic domain stretch occupies residues 547–929; the sequence is IRSDKESVLV…ALYKAFEASY (383 aa). In terms of domain architecture, ATP-grasp 2 spans 671-861; the sequence is EQALKELDIP…MAQVATKLIL (191 aa). 10 residues coordinate ATP: Arg707, Ser746, Ile748, Glu752, Gly777, Val778, His779, Ser780, Gln820, and Glu832. Mg(2+) is bound by residues Gln820, Glu832, and Asn834. Residues Gln820, Glu832, and Asn834 each coordinate Mn(2+). In terms of domain architecture, MGS-like spans 930 to 1058; the sequence is LHLPTFGNVV…ESRSFVTEAI (129 aa). The interval 930 to 1058 is allosteric domain; that stretch reads LHLPTFGNVV…ESRSFVTEAI (129 aa).

It belongs to the CarB family. Composed of two chains; the small (or glutamine) chain promotes the hydrolysis of glutamine to ammonia, which is used by the large (or ammonia) chain to synthesize carbamoyl phosphate. Tetramer of heterodimers (alpha,beta)4. Mg(2+) is required as a cofactor. It depends on Mn(2+) as a cofactor.

It carries out the reaction hydrogencarbonate + L-glutamine + 2 ATP + H2O = carbamoyl phosphate + L-glutamate + 2 ADP + phosphate + 2 H(+). The enzyme catalyses hydrogencarbonate + NH4(+) + 2 ATP = carbamoyl phosphate + 2 ADP + phosphate + 2 H(+). It functions in the pathway amino-acid biosynthesis; L-arginine biosynthesis; carbamoyl phosphate from bicarbonate: step 1/1. It participates in pyrimidine metabolism; UMP biosynthesis via de novo pathway; (S)-dihydroorotate from bicarbonate: step 1/3. Its function is as follows. Large subunit of the glutamine-dependent carbamoyl phosphate synthetase (CPSase). CPSase catalyzes the formation of carbamoyl phosphate from the ammonia moiety of glutamine, carbonate, and phosphate donated by ATP, constituting the first step of 2 biosynthetic pathways, one leading to arginine and/or urea and the other to pyrimidine nucleotides. The large subunit (synthetase) binds the substrates ammonia (free or transferred from glutamine from the small subunit), hydrogencarbonate and ATP and carries out an ATP-coupled ligase reaction, activating hydrogencarbonate by forming carboxy phosphate which reacts with ammonia to form carbamoyl phosphate. In Streptococcus pneumoniae (strain 70585), this protein is Carbamoyl phosphate synthase large chain.